A 315-amino-acid chain; its full sequence is UDP-N-acetylenolpyruvoylglucosamine reductase (315 aa).

The FAD-binding PCMH-type domain occupies 27–207 (RVGGPADVLY…TKRMNAITAR (181 aa)). Arg172 is an active-site residue. The segment at 214 to 236 (IREKTSGSTFANPDPPGTPNQRK) is disordered. The Proton donor role is filled by Ser221. Glu297 is a catalytic residue.

This sequence belongs to the MurB family. It depends on FAD as a cofactor.

Its subcellular location is the cytoplasm. It catalyses the reaction UDP-N-acetyl-alpha-D-muramate + NADP(+) = UDP-N-acetyl-3-O-(1-carboxyvinyl)-alpha-D-glucosamine + NADPH + H(+). The protein operates within cell wall biogenesis; peptidoglycan biosynthesis. Functionally, cell wall formation. This is UDP-N-acetylenolpyruvoylglucosamine reductase from Maricaulis maris (strain MCS10) (Caulobacter maris).